The chain runs to 574 residues: Pyruvate kinase PKLR (574 aa).

Residues S2, S19, S26, and S43 each carry the phosphoserine modification. R116 provides a ligand contact to substrate. Residues N118, S120, D156, and T157 each contribute to the K(+) site. Residue N118–H121 coordinates ATP. Residues R163 and K250 each contribute to the ATP site. S292 is modified (phosphoserine). Residue K313 coordinates substrate. Residue E315 participates in Mn(2+) binding. Residues G338, D339, and T371 each contribute to the substrate site. D339 lines the Mn(2+) pocket. Beta-D-fructose 1,6-bisphosphate contacts are provided by residues T475–S480, W525, R532, and R559–Y564.

It belongs to the pyruvate kinase family. Homotetramer. Requires Mg(2+) as cofactor. Mn(2+) is required as a cofactor. The cofactor is K(+).

The enzyme catalyses pyruvate + ATP = phosphoenolpyruvate + ADP + H(+). It functions in the pathway carbohydrate degradation; glycolysis; pyruvate from D-glyceraldehyde 3-phosphate: step 5/5. Its activity is regulated as follows. Allosterically activated by fructose 1,6-bisphosphate. In terms of biological role, pyruvate kinase that catalyzes the conversion of phosphoenolpyruvate to pyruvate with the synthesis of ATP, and which plays a key role in glycolysis. This is Pyruvate kinase PKLR (PKLR) from Homo sapiens (Human).